We begin with the raw amino-acid sequence, 163 residues long: MMSSKVQERDLIVSKIKDGIVIDHIPAGRALIVLRVLKLKGGEGRVALVMNADSRRLGRKDIVKIEGKELSNDELNLVSLIAPTATINIIRDYSVIKKFQVKLPETVKGVVKCRNPKCITNQPREDAVPTFRVLHLDQPILQCQYCGTYLTIDDINAQLTGER.

Cysteine 113, cysteine 118, cysteine 143, and cysteine 146 together coordinate Zn(2+).

This sequence belongs to the PyrI family. In terms of assembly, contains catalytic and regulatory chains. It depends on Zn(2+) as a cofactor.

Its function is as follows. Involved in allosteric regulation of aspartate carbamoyltransferase. The sequence is that of Aspartate carbamoyltransferase regulatory chain from Caldivirga maquilingensis (strain ATCC 700844 / DSM 13496 / JCM 10307 / IC-167).